Here is a 446-residue protein sequence, read N- to C-terminus: Cyclin-T1-1 (446 aa).

It belongs to the cyclin family. Cyclin T subfamily.

The protein is Cyclin-T1-1 (CYCT1-1) of Oryza sativa subsp. japonica (Rice).